The following is a 94-amino-acid chain: Nucleoid-associated protein MYPE8070 (94 aa).

The protein belongs to the YbaB/EbfC family. In terms of assembly, homodimer.

The protein localises to the cytoplasm. The protein resides in the nucleoid. In terms of biological role, binds to DNA and alters its conformation. May be involved in regulation of gene expression, nucleoid organization and DNA protection. This Malacoplasma penetrans (strain HF-2) (Mycoplasma penetrans) protein is Nucleoid-associated protein MYPE8070.